The following is a 354-amino-acid chain: Galectin-9 (354 aa).

Galectin domains are found at residues 17-147 and 226-354; these read FTGI…INFQ and FFTS…HVQT. Residues Asn47, His60, Arg64, Asn74, 81–87, His266, Arg270, Thr280, and 286–292 each bind a beta-D-galactoside; these read WGPEERK and WGPEERS.

As to expression, the isoform Long is expressed exclusively in the small intestine.

The protein resides in the cytoplasm. It localises to the nucleus. It is found in the secreted. Functionally, binds galactosides. Has high affinity for the Forssman pentasaccharide. Ligand for HAVCR2/TIM3. Binding to HAVCR2 induces T-helper type 1 lymphocyte (Th1) death. Also stimulates bactericidal activity in infected macrophages by causing macrophage activation and IL1B secretion which restricts intracellular bacterial growth. Ligand for P4HB; the interaction retains P4HB at the cell surface of Th2 T helper cells, increasing disulfide reductase activity at the plasma membrane, altering the plasma membrane redox state and enhancing cell migration. Ligand for CD44; the interaction enhances binding of SMAD3 to the FOXP3 promoter, leading to up-regulation of FOXP3 expression and increased induced regulatory T (iTreg) cell stability and suppressive function. Promotes ability of mesenchymal stromal cells to suppress T-cell proliferation. Expands regulatory T-cells and induces cytotoxic T-cell apoptosis following virus infection. Activates ERK1/2 phosphorylation inducing cytokine (IL-6, IL-8, IL-12) and chemokine (CCL2) production in mast and dendritic cells. Inhibits degranulation and induces apoptosis of mast cells. Induces maturation and migration of dendritic cells. Inhibits natural killer (NK) cell function. Can transform NK cell phenotype from peripheral to decidual during pregnancy. Astrocyte derived galectin-9 enhances microglial TNF production. May play a role in thymocyte-epithelial interactions relevant to the biology of the thymus. May provide the molecular basis for urate flux across cell membranes, allowing urate that is formed during purine metabolism to efflux from cells and serving as an electrogenic transporter that plays an important role in renal and gastrointestinal urate excretion. Highly selective to the anion urate. This Rattus norvegicus (Rat) protein is Galectin-9 (Lgals9).